Consider the following 284-residue polypeptide: Cell division protein FtsQ (284 aa).

The Cytoplasmic portion of the chain corresponds to 1 to 31 (MAQLPASMRRKRAAITSIHDKPPTRKQKLAN). Residues 32–52 (AGGWVLLVIAFVVLAVGIYGL) form a helical membrane-spanning segment. Over 53–284 (YKVITDATVA…SIAGGTKAKP (232 aa)) the chain is Periplasmic. The 70-residue stretch at 59–128 (ATVAKLEVVG…NGIRVRVMPR (70 aa)) folds into the POTRA domain.

The protein belongs to the FtsQ/DivIB family. FtsQ subfamily. Part of a complex composed of FtsB, FtsL and FtsQ.

It localises to the cell inner membrane. In terms of biological role, essential cell division protein. May link together the upstream cell division proteins, which are predominantly cytoplasmic, with the downstream cell division proteins, which are predominantly periplasmic. May control correct divisome assembly. The polypeptide is Cell division protein FtsQ (Acinetobacter oleivorans (strain JCM 16667 / KCTC 23045 / DR1)).